The chain runs to 555 residues: Serine/threonine-protein kinase Nek4 (555 aa).

A Protein kinase domain is found at 4 to 258 (YEVLEQIGKG…ANELLNHPHL (255 aa)). ATP is bound by residues 10–18 (IGKGSFGSA) and Lys-33. The active-site Proton acceptor is Asp-129. 3 disordered regions span residues 288-328 (LKER…MFNG), 346-372 (QRQEEAKKQSGAARTPRVAGTSAKAST), and 443-477 (NRETASRREVARHSFSSPPCPPHGEDNSNGSITKD). Over residues 304 to 320 (PSVSDTEAGSVSSSGKA) the composition is skewed to polar residues.

It belongs to the protein kinase superfamily. NEK Ser/Thr protein kinase family. NIMA subfamily.

The enzyme catalyses L-seryl-[protein] + ATP = O-phospho-L-seryl-[protein] + ADP + H(+). It carries out the reaction L-threonyl-[protein] + ATP = O-phospho-L-threonyl-[protein] + ADP + H(+). Its function is as follows. May be involved in plant development processes. This chain is Serine/threonine-protein kinase Nek4 (NEK4), found in Arabidopsis thaliana (Mouse-ear cress).